The chain runs to 574 residues: Putative diflavin flavoprotein A 3 (574 aa).

The interval 43 to 236 is zinc metallo-hydrolase; that stretch reads QNGTTYNSFL…PSVKMIATGH (194 aa). Fe cation contacts are provided by histidine 92, glutamate 94, aspartate 96, histidine 159, aspartate 178, and histidine 236. In terms of domain architecture, Flavodoxin-like spans 265–409; sequence IGVFYVSEYG…DLGQWVTRDR (145 aa). The tract at residues 410 to 574 is flavodoxin-reductase-like; that stretch reads SIKAMKSLGA…VHHRKVGNHY (165 aa).

In the N-terminal section; belongs to the zinc metallo-hydrolase group 3 family. The protein in the C-terminal section; belongs to the flavodoxin reductase family. Fe cation is required as a cofactor.

Functionally, mediates electron transfer from NADH to oxygen, reducing it to water. This modular protein has 3 redox cofactors, in other organisms the same activity requires 2 or 3 proteins. In Nostoc sp. (strain PCC 7120 / SAG 25.82 / UTEX 2576), this protein is Putative diflavin flavoprotein A 3 (dfa3).